The sequence spans 309 residues: Ribonuclease Z (309 aa).

Residues His63, His65, Asp67, His68, His145, Asp216, and His274 each contribute to the Zn(2+) site. Asp67 acts as the Proton acceptor in catalysis.

It belongs to the RNase Z family. In terms of assembly, homodimer. It depends on Zn(2+) as a cofactor.

It catalyses the reaction Endonucleolytic cleavage of RNA, removing extra 3' nucleotides from tRNA precursor, generating 3' termini of tRNAs. A 3'-hydroxy group is left at the tRNA terminus and a 5'-phosphoryl group is left at the trailer molecule.. In terms of biological role, zinc phosphodiesterase, which displays some tRNA 3'-processing endonuclease activity. Probably involved in tRNA maturation, by removing a 3'-trailer from precursor tRNA. The protein is Ribonuclease Z of Streptococcus gordonii (strain Challis / ATCC 35105 / BCRC 15272 / CH1 / DL1 / V288).